The following is a 51-amino-acid chain: uncharacterized protein (51 aa).

This is an uncharacterized protein from Bacillus subtilis (strain 168).